We begin with the raw amino-acid sequence, 241 residues long: Trypsin-10 (241 aa).

The N-terminal stretch at Met1 to Val13 is a signal peptide. The propeptide at Phe14–Lys19 is activation peptide. Residues Ile20–Ala239 enclose the Peptidase S1 domain. 6 disulfides stabilise this stretch: Cys26–Cys155, Cys44–Cys60, Cys128–Cys228, Cys135–Cys201, Cys166–Cys180, and Cys191–Cys215. Active-site charge relay system residues include His59 and Asp103. The active-site Charge relay system is the Ser195.

Belongs to the peptidase S1 family.

It is found in the secreted. The protein localises to the extracellular space. It carries out the reaction Preferential cleavage: Arg-|-Xaa, Lys-|-Xaa.. In Gadus morhua (Atlantic cod), this protein is Trypsin-10.